Consider the following 477-residue polypeptide: Ubiquitin carboxyl-terminal hydrolase 7 (477 aa).

One can recognise a Ubiquitin-like domain in the interval 2-77 (LTVSVKWQKK…LMMMGTADEI (76 aa)). Positions 104 to 473 (AGLVNLGNTC…MAYIVMYKAR (370 aa)) constitute a USP domain. The Nucleophile role is filled by cysteine 113. The calmodulin-binding stretch occupies residues 171–190 (MPFWMVLQKKYPQFAQLHNG). A disordered region spans residues 364 to 401 (QASAKSSSKGDDVKMTDAEGSSNQSGESSTGDQQEGAS). Residues 371 to 380 (SKGDDVKMTD) show a composition bias toward basic and acidic residues. A compositionally biased stretch (polar residues) spans 382–399 (EGSSNQSGESSTGDQQEG). Histidine 425 acts as the Proton acceptor in catalysis.

This sequence belongs to the peptidase C19 family. Interacts with calmodulin (CaM).

It carries out the reaction Thiol-dependent hydrolysis of ester, thioester, amide, peptide and isopeptide bonds formed by the C-terminal Gly of ubiquitin (a 76-residue protein attached to proteins as an intracellular targeting signal).. In terms of biological role, recognizes and hydrolyzes the peptide bond at the C-terminal Gly of ubiquitin. Involved in the processing of poly-ubiquitin precursors as well as that of ubiquitinated proteins. This is Ubiquitin carboxyl-terminal hydrolase 7 (UBP7) from Arabidopsis thaliana (Mouse-ear cress).